Here is a 446-residue protein sequence, read N- to C-terminus: Glutamine synthetase (446 aa).

Residues N14–G107 enclose the GS beta-grasp domain. The 333-residue stretch at P114–I446 folds into the GS catalytic domain. E138 and E140 together coordinate Mg(2+). E187 lines the ATP pocket. Mg(2+)-binding residues include E192 and E199. Residues N243–G244 and G244 each bind L-glutamate. H248 is a Mg(2+) binding site. Position 252 (S252) interacts with ATP. R301, E307, and R319 together coordinate L-glutamate. The ATP site is built by R319, R324, and K331. E336 is a binding site for Mg(2+). R338 is an L-glutamate binding site.

This sequence belongs to the glutamine synthetase family. In terms of assembly, oligomer of 12 subunits arranged in the form of two hexagons. The cofactor is Mg(2+).

It localises to the cytoplasm. It catalyses the reaction L-glutamate + NH4(+) + ATP = L-glutamine + ADP + phosphate + H(+). Functionally, probably involved in nitrogen metabolism via ammonium assimilation. Catalyzes the ATP-dependent biosynthesis of glutamine from glutamate and ammonia. This is Glutamine synthetase from Methanococcus voltae.